The sequence spans 253 residues: Ubiquinone/menaquinone biosynthesis C-methyltransferase UbiE (253 aa).

S-adenosyl-L-methionine-binding positions include T76, D97, 125–126, and S142; that span reads NA.

Belongs to the class I-like SAM-binding methyltransferase superfamily. MenG/UbiE family.

It carries out the reaction a 2-demethylmenaquinol + S-adenosyl-L-methionine = a menaquinol + S-adenosyl-L-homocysteine + H(+). It catalyses the reaction a 2-methoxy-6-(all-trans-polyprenyl)benzene-1,4-diol + S-adenosyl-L-methionine = a 5-methoxy-2-methyl-3-(all-trans-polyprenyl)benzene-1,4-diol + S-adenosyl-L-homocysteine + H(+). Its pathway is quinol/quinone metabolism; menaquinone biosynthesis; menaquinol from 1,4-dihydroxy-2-naphthoate: step 2/2. It participates in cofactor biosynthesis; ubiquinone biosynthesis. Its function is as follows. Methyltransferase required for the conversion of demethylmenaquinol (DMKH2) to menaquinol (MKH2) and the conversion of 2-polyprenyl-6-methoxy-1,4-benzoquinol (DDMQH2) to 2-polyprenyl-3-methyl-6-methoxy-1,4-benzoquinol (DMQH2). The polypeptide is Ubiquinone/menaquinone biosynthesis C-methyltransferase UbiE (Xanthomonas campestris pv. campestris (strain ATCC 33913 / DSM 3586 / NCPPB 528 / LMG 568 / P 25)).